The chain runs to 477 residues: Protoporphyrinogen oxidase (477 aa).

FAD-binding positions include 9–14 (GGGISG), Trp42, 57–60 (GPRG), Val257, Ala449, and 454–456 (VAV).

This sequence belongs to the protoporphyrinogen/coproporphyrinogen oxidase family. Protoporphyrinogen oxidase subfamily. As to quaternary structure, monomer. Homodimer. FAD is required as a cofactor.

It is found in the mitochondrion inner membrane. The enzyme catalyses protoporphyrinogen IX + 3 O2 = protoporphyrin IX + 3 H2O2. The protein operates within porphyrin-containing compound metabolism; protoporphyrin-IX biosynthesis; protoporphyrin-IX from protoporphyrinogen-IX: step 1/1. Its function is as follows. Catalyzes the 6-electron oxidation of protoporphyrinogen-IX to form protoporphyrin-IX. The protein is Protoporphyrinogen oxidase (PPOX) of Macaca fascicularis (Crab-eating macaque).